Consider the following 839-residue polypeptide: LPS-assembly protein LptD (839 aa).

The signal sequence occupies residues 1 to 21 (MAIGITACVLSLINYQGLAYS).

This sequence belongs to the LptD family. In terms of assembly, component of the lipopolysaccharide transport and assembly complex. Interacts with LptE and LptA.

The protein localises to the cell outer membrane. In terms of biological role, together with LptE, is involved in the assembly of lipopolysaccharide (LPS) at the surface of the outer membrane. The chain is LPS-assembly protein LptD from Legionella pneumophila (strain Lens).